We begin with the raw amino-acid sequence, 181 residues long: Large ribosomal subunit protein uL10 (181 aa).

This sequence belongs to the universal ribosomal protein uL10 family. In terms of assembly, part of the ribosomal stalk of the 50S ribosomal subunit. The N-terminus interacts with L11 and the large rRNA to form the base of the stalk. The C-terminus forms an elongated spine to which L12 dimers bind in a sequential fashion forming a multimeric L10(L12)X complex.

Functionally, forms part of the ribosomal stalk, playing a central role in the interaction of the ribosome with GTP-bound translation factors. This is Large ribosomal subunit protein uL10 from Amoebophilus asiaticus (strain 5a2).